The chain runs to 346 residues: Ribonucleoside-diphosphate reductase subunit beta (346 aa).

Fe cation contacts are provided by Glu89, Glu120, and His123. The active site involves Tyr129. 3 residues coordinate Fe cation: Glu193, Glu227, and His230.

Belongs to the ribonucleoside diphosphate reductase small chain family. As to quaternary structure, tetramer of two alpha and two beta subunits. Fe cation serves as cofactor.

It carries out the reaction a 2'-deoxyribonucleoside 5'-diphosphate + [thioredoxin]-disulfide + H2O = a ribonucleoside 5'-diphosphate + [thioredoxin]-dithiol. Provides the precursors necessary for DNA synthesis. Catalyzes the biosynthesis of deoxyribonucleotides from the corresponding ribonucleotides. The protein is Ribonucleoside-diphosphate reductase subunit beta (nrdB) of Chlamydia muridarum (strain MoPn / Nigg).